A 368-amino-acid polypeptide reads, in one-letter code: Phosphate acyltransferase (368 aa).

The disordered stretch occupies residues 334 to 368 (EGSLEQAARDASGAGHASPIAGQPAEPYAAQSSKA).

This sequence belongs to the PlsX family. As to quaternary structure, homodimer. Probably interacts with PlsY.

It is found in the cytoplasm. It carries out the reaction a fatty acyl-[ACP] + phosphate = an acyl phosphate + holo-[ACP]. The protein operates within lipid metabolism; phospholipid metabolism. Functionally, catalyzes the reversible formation of acyl-phosphate (acyl-PO(4)) from acyl-[acyl-carrier-protein] (acyl-ACP). This enzyme utilizes acyl-ACP as fatty acyl donor, but not acyl-CoA. The polypeptide is Phosphate acyltransferase (Paraburkholderia xenovorans (strain LB400)).